The chain runs to 326 residues: Lipid droplet-associated hydrolase (326 aa).

The Nucleophile role is filled by serine 140. Residues aspartate 272 and histidine 301 each act as charge relay system in the active site.

It belongs to the AB hydrolase superfamily. LDAH family. As to expression, expressed in liver, adrenal gland, prostate, spleen, kidney, brown and white adipose tissue, testis and to a lesser extent in brain (at protein level). Expressed in peritoneal macrophages and bone marrow-derived macrophages (at protein level). Highly expressed in macrophage and foam cell-rich areas in atherosclerotic lesions (at protein level). mRNA, but no protein, expressed in heart and muscle.

It localises to the lipid droplet. The protein resides in the endoplasmic reticulum. It carries out the reaction a cholesterol ester + H2O = cholesterol + a fatty acid + H(+). Its function is as follows. Probable serine lipid hydrolase associated with lipid droplets. Has low cholesterol esterase activity. Appears to lack triglyceride lipase activity. Involved in cholesterol and triglyceride homeostasis; stimulates cellular triglyceride accumulation and cellular cholesterol release. Acts antagonistically with PNPLA2/ATGL in regulation of cellular lipid stores. May regulate triglyceride accumulation indirectly through stimulation of PNPLA2/ATGL ubiquitination and proteasomal degradation. Promotes microtubule-dependent lipid droplet fusion. Highly expressed in macrophage-rich areas in atherosclerotic lesions, suggesting that it could promote cholesterol ester turnover in macrophages. Functionally, stimulates cellular triglyceride accumulation and lipid droplet fusion. In terms of biological role, associates with lipid droplets but does not stimulate cellular triglyceride accumulation, lipid droplet fusion or ATGL proteasomal degradation. The chain is Lipid droplet-associated hydrolase from Mus musculus (Mouse).